Reading from the N-terminus, the 99-residue chain is Large ribosomal subunit protein bL28 (99 aa).

Belongs to the bacterial ribosomal protein bL28 family.

The protein is Large ribosomal subunit protein bL28 of Rhizobium leguminosarum bv. trifolii (strain WSM2304).